The following is a 437-amino-acid chain: UDP-N-acetylmuramate--L-alanine ligase (437 aa).

108 to 114 (GAHGKTS) is a binding site for ATP.

It belongs to the MurCDEF family.

It localises to the cytoplasm. The catalysed reaction is UDP-N-acetyl-alpha-D-muramate + L-alanine + ATP = UDP-N-acetyl-alpha-D-muramoyl-L-alanine + ADP + phosphate + H(+). It functions in the pathway cell wall biogenesis; peptidoglycan biosynthesis. In terms of biological role, cell wall formation. The protein is UDP-N-acetylmuramate--L-alanine ligase of Staphylococcus saprophyticus subsp. saprophyticus (strain ATCC 15305 / DSM 20229 / NCIMB 8711 / NCTC 7292 / S-41).